The sequence spans 350 residues: Protein RecA (350 aa).

67–74 (GPESSGKT) is a binding site for ATP.

Belongs to the RecA family.

The protein resides in the cytoplasm. Its function is as follows. Can catalyze the hydrolysis of ATP in the presence of single-stranded DNA, the ATP-dependent uptake of single-stranded DNA by duplex DNA, and the ATP-dependent hybridization of homologous single-stranded DNAs. It interacts with LexA causing its activation and leading to its autocatalytic cleavage. This is Protein RecA from Chlamydia caviae (strain ATCC VR-813 / DSM 19441 / 03DC25 / GPIC) (Chlamydophila caviae).